Reading from the N-terminus, the 642-residue chain is Tigger transposable element-derived protein 5 (642 aa).

Pro residues-rich tracts occupy residues Met1–Pro10 and Leu19–Arg43. Residues Met1–Arg45 are disordered. The HTH psq-type domain maps to Ala47–Leu98. DNA-binding regions (H-T-H motif) lie at residues Gln74–Asp94 and Pro145–Arg178. An HTH CENPB-type domain is found at Gln112–Arg185. The segment at Arg185–Asp233 is disordered. 2 stretches are compositionally biased toward pro residues: residues Pro192 to Pro202 and Asp218 to Ala227. 2 DDE-1 domains span residues Asp233–Val357 and Arg410–Trp477. Positions Leu535–Thr587 are disordered. The span at Ala552–Ala562 shows a compositional bias: pro residues.

Belongs to the tigger transposable element derived protein family.

It localises to the nucleus. In Homo sapiens (Human), this protein is Tigger transposable element-derived protein 5 (TIGD5).